A 136-amino-acid chain; its full sequence is Translation initiation factor 5A (136 aa).

Position 36 is a hypusine (Lys36).

This sequence belongs to the eIF-5A family.

The protein localises to the cytoplasm. In terms of biological role, functions by promoting the formation of the first peptide bond. This Hyperthermus butylicus (strain DSM 5456 / JCM 9403 / PLM1-5) protein is Translation initiation factor 5A (eIF5A).